The chain runs to 471 residues: Probable ribonuclease FAU-1 (471 aa).

It belongs to the FAU-1 family.

Probable RNase involved in rRNA stability through maturation and/or degradation of precursor rRNAs. Binds to RNA in loop regions with AU-rich sequences. The protein is Probable ribonuclease FAU-1 of Aeropyrum pernix (strain ATCC 700893 / DSM 11879 / JCM 9820 / NBRC 100138 / K1).